Consider the following 376-residue polypeptide: 3-dehydroquinate synthase (376 aa).

NAD(+)-binding positions include 115–119, 139–140, K152, and K161; these read GVIGD and TS. Zn(2+) is bound by residues E194, H256, and H275.

The protein belongs to the sugar phosphate cyclases superfamily. Dehydroquinate synthase family. The cofactor is Co(2+). Zn(2+) is required as a cofactor. NAD(+) serves as cofactor.

It localises to the cytoplasm. The enzyme catalyses 7-phospho-2-dehydro-3-deoxy-D-arabino-heptonate = 3-dehydroquinate + phosphate. It functions in the pathway metabolic intermediate biosynthesis; chorismate biosynthesis; chorismate from D-erythrose 4-phosphate and phosphoenolpyruvate: step 2/7. In terms of biological role, catalyzes the conversion of 3-deoxy-D-arabino-heptulosonate 7-phosphate (DAHP) to dehydroquinate (DHQ). This Rhizobium etli (strain CIAT 652) protein is 3-dehydroquinate synthase.